Here is a 274-residue protein sequence, read N- to C-terminus: 2,3,4,5-tetrahydropyridine-2,6-dicarboxylate N-succinyltransferase (274 aa).

Residues Arg104 and Asp141 each contribute to the substrate site.

This sequence belongs to the transferase hexapeptide repeat family. As to quaternary structure, homotrimer.

Its subcellular location is the cytoplasm. It carries out the reaction (S)-2,3,4,5-tetrahydrodipicolinate + succinyl-CoA + H2O = (S)-2-succinylamino-6-oxoheptanedioate + CoA. It functions in the pathway amino-acid biosynthesis; L-lysine biosynthesis via DAP pathway; LL-2,6-diaminopimelate from (S)-tetrahydrodipicolinate (succinylase route): step 1/3. This Shewanella loihica (strain ATCC BAA-1088 / PV-4) protein is 2,3,4,5-tetrahydropyridine-2,6-dicarboxylate N-succinyltransferase.